A 278-amino-acid polypeptide reads, in one-letter code: HTH-type transcriptional regulator HdfR (278 aa).

An HTH lysR-type domain is found at 1 to 58 (MDTELLKTFLEVSRTRHFGRAAEALYLTQSAVSFRIRQLENQLGVNLFTRHRNNIRLT). A DNA-binding region (H-T-H motif) is located at residues 18–37 (FGRAAEALYLTQSAVSFRIR).

The protein belongs to the LysR transcriptional regulatory family.

Negatively regulates the transcription of the flagellar master operon flhDC by binding to the upstream region of the operon. The sequence is that of HTH-type transcriptional regulator HdfR from Salmonella schwarzengrund (strain CVM19633).